Consider the following 485-residue polypeptide: Rhamnulokinase (485 aa).

11–15 (ASSGR) is an ATP binding site. Substrate-binding positions include alanine 79 and 234 to 236 (HDT). Aspartate 235 acts as the Proton acceptor in catalysis. Threonine 257 contacts ATP. A substrate-binding site is contributed by asparagine 294. Positions 302 and 401 each coordinate ATP.

This sequence belongs to the rhamnulokinase family. Mg(2+) serves as cofactor.

The catalysed reaction is L-rhamnulose + ATP = L-rhamnulose 1-phosphate + ADP + H(+). The protein operates within carbohydrate degradation; L-rhamnose degradation; glycerone phosphate from L-rhamnose: step 2/3. Involved in the catabolism of L-rhamnose (6-deoxy-L-mannose). Catalyzes the transfer of the gamma-phosphate group from ATP to the 1-hydroxyl group of L-rhamnulose to yield L-rhamnulose 1-phosphate. This Ligilactobacillus salivarius (strain UCC118) (Lactobacillus salivarius) protein is Rhamnulokinase.